Reading from the N-terminus, the 545-residue chain is Glucose-6-phosphate isomerase (545 aa).

E351 (proton donor) is an active-site residue. Residues H382 and K510 contribute to the active site.

It belongs to the GPI family.

It is found in the cytoplasm. The catalysed reaction is alpha-D-glucose 6-phosphate = beta-D-fructose 6-phosphate. The protein operates within carbohydrate biosynthesis; gluconeogenesis. It functions in the pathway carbohydrate degradation; glycolysis; D-glyceraldehyde 3-phosphate and glycerone phosphate from D-glucose: step 2/4. In terms of biological role, catalyzes the reversible isomerization of glucose-6-phosphate to fructose-6-phosphate. The polypeptide is Glucose-6-phosphate isomerase (Helicobacter pylori (strain J99 / ATCC 700824) (Campylobacter pylori J99)).